The sequence spans 217 residues: uncharacterized protein (217 aa).

Residues 98–203 enclose the PilZ domain; it reads QRRQYVRTDA…GDQQALLQYC (106 aa).

This is an uncharacterized protein from Bacillus subtilis (strain 168).